The primary structure comprises 406 residues: Arginine decarboxylase (406 aa).

The residue at position 8 (K8) is an N6-(pyridoxal phosphate)lysine. Substrate is bound at residue 192 to 202 (VDFGGGLGIDY).

Belongs to the Orn/Lys/Arg decarboxylase class-II family. SpeA subfamily. Requires pyridoxal 5'-phosphate as cofactor. Mg(2+) serves as cofactor.

It carries out the reaction L-arginine + H(+) = agmatine + CO2. It participates in amine and polyamine biosynthesis; agmatine biosynthesis; agmatine from L-arginine: step 1/1. The protein is Arginine decarboxylase (SPE2) of Theobroma cacao (Cacao).